Reading from the N-terminus, the 272-residue chain is Bis(5'-nucleosyl)-tetraphosphatase, symmetrical (272 aa).

Belongs to the Ap4A hydrolase family.

The enzyme catalyses P(1),P(4)-bis(5'-adenosyl) tetraphosphate + H2O = 2 ADP + 2 H(+). Its function is as follows. Hydrolyzes diadenosine 5',5'''-P1,P4-tetraphosphate to yield ADP. This Ectopseudomonas mendocina (strain ymp) (Pseudomonas mendocina) protein is Bis(5'-nucleosyl)-tetraphosphatase, symmetrical.